The chain runs to 232 residues: 5'-methylthioadenosine/S-adenosylhomocysteine nucleosidase (232 aa).

The Proton acceptor role is filled by Glu12. Residues Gly78, Met153, and 174–175 each bind substrate; that span reads ME. The active-site Proton donor is Asp198.

The protein belongs to the PNP/UDP phosphorylase family. MtnN subfamily.

The catalysed reaction is S-adenosyl-L-homocysteine + H2O = S-(5-deoxy-D-ribos-5-yl)-L-homocysteine + adenine. The enzyme catalyses S-methyl-5'-thioadenosine + H2O = 5-(methylsulfanyl)-D-ribose + adenine. It carries out the reaction 5'-deoxyadenosine + H2O = 5-deoxy-D-ribose + adenine. It participates in amino-acid biosynthesis; L-methionine biosynthesis via salvage pathway; S-methyl-5-thio-alpha-D-ribose 1-phosphate from S-methyl-5'-thioadenosine (hydrolase route): step 1/2. Its function is as follows. Catalyzes the irreversible cleavage of the glycosidic bond in both 5'-methylthioadenosine (MTA) and S-adenosylhomocysteine (SAH/AdoHcy) to adenine and the corresponding thioribose, 5'-methylthioribose and S-ribosylhomocysteine, respectively. Also cleaves 5'-deoxyadenosine, a toxic by-product of radical S-adenosylmethionine (SAM) enzymes, into 5-deoxyribose and adenine. The chain is 5'-methylthioadenosine/S-adenosylhomocysteine nucleosidase from Anoxybacillus flavithermus (strain DSM 21510 / WK1).